A 624-amino-acid chain; its full sequence is Probable Xaa-Pro aminopeptidase P (624 aa).

The Mn(2+) site is built by aspartate 414, aspartate 425, glutamate 530, and glutamate 544.

This sequence belongs to the peptidase M24B family. The cofactor is Mn(2+).

It carries out the reaction Release of any N-terminal amino acid, including proline, that is linked to proline, even from a dipeptide or tripeptide.. In terms of biological role, catalyzes the removal of a penultimate prolyl residue from the N-termini of peptides. In Chaetomium globosum (strain ATCC 6205 / CBS 148.51 / DSM 1962 / NBRC 6347 / NRRL 1970) (Soil fungus), this protein is Probable Xaa-Pro aminopeptidase P (AMPP).